A 467-amino-acid chain; its full sequence is MRISKNSHKRQRTRLYFLVTFIIYSIIPCRAVLVPWLDDDPFEATLLEMGDEPWSKDILSSTPPLHPSEVTEDNKSLKQRGNVPQYVIDNSPLLHLYSEEKYWPADVKDFVKRFQLRDHSGEKIINEHLRDLSDLQEYYSVELENGTWGRVSSEGTYMTSLDDFDKGPDWLLGEQPEYGTGHIKKAPAVLFVVDKGNGWVDAFWFYFYPFNWGPYIMGSGPWGNHVGDWEHSLVRFYKGEPQYLWMSAHGGGSAYKFEAIEKIKRLRRVDGKLTNEVIKKPLIFSARGTHAHYASVGQHAHDVPFFFMPLSDFTDRGPLWDPSLNYYAYTVTVGEKMTPCGAEETKMGLEWLSFKGAWGDKQLRPRDPRQKWCPFQWKYIDGPKGPLFKNMERVSLCQRFKWWNFWKGCPARRYIKRGEGLDAEKNDLVGDNCGILLYNIRPKWLRSILRFLTWRGSVCFIMDYFTG.

The helical transmembrane segment at 17 to 37 (FLVTFIIYSIIPCRAVLVPWL) threads the bilayer. N-linked (GlcNAc...) asparagine glycans are attached at residues Asn-74 and Asn-145.

It belongs to the VPS62 family.

The protein localises to the membrane. Functionally, involved in vacuolar protein sorting. The chain is Vacuolar protein sorting-associated protein 62 (VPS62) from Saccharomyces cerevisiae (strain ATCC 204508 / S288c) (Baker's yeast).